A 424-amino-acid polypeptide reads, in one-letter code: Serine--tRNA ligase (424 aa).

T230–E232 lines the L-serine pocket. Residues R261–E263 and V277 each bind ATP. E284 contacts L-serine. E348–S351 is a binding site for ATP. T382 contacts L-serine.

The protein belongs to the class-II aminoacyl-tRNA synthetase family. Type-1 seryl-tRNA synthetase subfamily. In terms of assembly, homodimer. The tRNA molecule binds across the dimer.

It localises to the cytoplasm. It catalyses the reaction tRNA(Ser) + L-serine + ATP = L-seryl-tRNA(Ser) + AMP + diphosphate + H(+). It carries out the reaction tRNA(Sec) + L-serine + ATP = L-seryl-tRNA(Sec) + AMP + diphosphate + H(+). The protein operates within aminoacyl-tRNA biosynthesis; selenocysteinyl-tRNA(Sec) biosynthesis; L-seryl-tRNA(Sec) from L-serine and tRNA(Sec): step 1/1. Its function is as follows. Catalyzes the attachment of serine to tRNA(Ser). Is also able to aminoacylate tRNA(Sec) with serine, to form the misacylated tRNA L-seryl-tRNA(Sec), which will be further converted into selenocysteinyl-tRNA(Sec). The sequence is that of Serine--tRNA ligase from Nocardioides sp. (strain ATCC BAA-499 / JS614).